Reading from the N-terminus, the 326-residue chain is Pyruvate dehydrogenase E1 component subunit beta (326 aa).

Glutamate 59 is a thiamine diphosphate binding site.

Heterodimer of an alpha and a beta chain. Thiamine diphosphate serves as cofactor.

It carries out the reaction N(6)-[(R)-lipoyl]-L-lysyl-[protein] + pyruvate + H(+) = N(6)-[(R)-S(8)-acetyldihydrolipoyl]-L-lysyl-[protein] + CO2. Functionally, the pyruvate dehydrogenase complex catalyzes the overall conversion of pyruvate to acetyl-CoA and CO(2). It contains multiple copies of three enzymatic components: pyruvate dehydrogenase (E1), dihydrolipoamide acetyltransferase (E2) and lipoamide dehydrogenase (E3). The protein is Pyruvate dehydrogenase E1 component subunit beta (pdhB) of Rickettsia conorii (strain ATCC VR-613 / Malish 7).